The primary structure comprises 248 residues: Type III pantothenate kinase (248 aa).

8–15 contributes to the ATP binding site; that stretch reads DAGNTRTK. Substrate-binding positions include Y87 and 94-97; that span reads GVDR. The active-site Proton acceptor is the D96. An ATP-binding site is contributed by T119. Residue T173 coordinates substrate.

Belongs to the type III pantothenate kinase family. As to quaternary structure, homodimer. NH4(+) is required as a cofactor. K(+) serves as cofactor.

The protein localises to the cytoplasm. It catalyses the reaction (R)-pantothenate + ATP = (R)-4'-phosphopantothenate + ADP + H(+). It participates in cofactor biosynthesis; coenzyme A biosynthesis; CoA from (R)-pantothenate: step 1/5. Functionally, catalyzes the phosphorylation of pantothenate (Pan), the first step in CoA biosynthesis. The sequence is that of Type III pantothenate kinase from Methylobacillus flagellatus (strain ATCC 51484 / DSM 6875 / VKM B-1610 / KT).